The following is a 200-amino-acid chain: Small ribosomal subunit protein mS38 (200 aa).

It belongs to the mitochondrion-specific ribosomal protein mS38 family. As to quaternary structure, component of the mitochondrial ribosome small subunit (28S) which comprises a 12S rRNA and about 30 distinct proteins. Interacts with Aurora-A. In terms of tissue distribution, ubiquitously expressed and especially highly expressed in heart, skeletal muscle and testis.

Its subcellular location is the mitochondrion matrix. The protein resides in the nucleus. May act as a negative regulator of Aurora-A kinase, by down-regulation through proteasome-dependent degradation. The sequence is that of Small ribosomal subunit protein mS38 (Aurkaip1) from Mus musculus (Mouse).